Here is a 194-residue protein sequence, read N- to C-terminus: ATP-dependent Clp protease proteolytic subunit (194 aa).

Ser-98 (nucleophile) is an active-site residue. His-123 is a catalytic residue.

The protein belongs to the peptidase S14 family. As to quaternary structure, fourteen ClpP subunits assemble into 2 heptameric rings which stack back to back to give a disk-like structure with a central cavity, resembling the structure of eukaryotic proteasomes.

It localises to the cytoplasm. The enzyme catalyses Hydrolysis of proteins to small peptides in the presence of ATP and magnesium. alpha-casein is the usual test substrate. In the absence of ATP, only oligopeptides shorter than five residues are hydrolyzed (such as succinyl-Leu-Tyr-|-NHMec, and Leu-Tyr-Leu-|-Tyr-Trp, in which cleavage of the -Tyr-|-Leu- and -Tyr-|-Trp bonds also occurs).. In terms of biological role, cleaves peptides in various proteins in a process that requires ATP hydrolysis. Has a chymotrypsin-like activity. Plays a major role in the degradation of misfolded proteins. The chain is ATP-dependent Clp protease proteolytic subunit from Clostridium botulinum (strain Loch Maree / Type A3).